A 511-amino-acid chain; its full sequence is Ribose import ATP-binding protein RbsA (511 aa).

ABC transporter domains are found at residues F9 to D245 and L261 to R506. Residue G41–S48 participates in ATP binding.

This sequence belongs to the ABC transporter superfamily. Ribose importer (TC 3.A.1.2.1) family. In terms of assembly, the complex is composed of an ATP-binding protein (RbsA), two transmembrane proteins (RbsC) and a solute-binding protein (RbsB).

The protein localises to the cell inner membrane. It catalyses the reaction D-ribose(out) + ATP + H2O = D-ribose(in) + ADP + phosphate + H(+). In terms of biological role, part of the ABC transporter complex RbsABC involved in ribose import. Responsible for energy coupling to the transport system. The chain is Ribose import ATP-binding protein RbsA from Rhodopirellula baltica (strain DSM 10527 / NCIMB 13988 / SH1).